The following is a 226-amino-acid chain: ATP synthase F(0) complex subunit a (226 aa).

6 helical membrane passes run 12 to 32, 68 to 88, 97 to 117, 138 to 158, 164 to 184, and 189 to 209; these read PTMMGLPIVILIVLFPSILFP, WALMLISLILFIGSTNLLGLL, QLSMNLGMAIPLWAGTVITGF, IPMLVIIETISLFIQPMALAV, ITAGHLLIHLIGGATLALMDI, and AFITFTILILLTILEFAVALI.

This sequence belongs to the ATPase A chain family. In terms of assembly, component of the ATP synthase complex composed at least of ATP5F1A/subunit alpha, ATP5F1B/subunit beta, ATP5MC1/subunit c (homooctomer), MT-ATP6/subunit a, MT-ATP8/subunit 8, ATP5ME/subunit e, ATP5MF/subunit f, ATP5MG/subunit g, ATP5MK/subunit k, ATP5MJ/subunit j, ATP5F1C/subunit gamma, ATP5F1D/subunit delta, ATP5F1E/subunit epsilon, ATP5PF/subunit F6, ATP5PB/subunit b, ATP5PD/subunit d, ATP5PO/subunit OSCP. ATP synthase complex consists of a soluble F(1) head domain (subunits alpha(3) and beta(3)) - the catalytic core - and a membrane F(0) domain - the membrane proton channel (subunits c, a, 8, e, f, g, k and j). These two domains are linked by a central stalk (subunits gamma, delta, and epsilon) rotating inside the F1 region and a stationary peripheral stalk (subunits F6, b, d, and OSCP). Interacts with DNAJC30; interaction is direct.

It localises to the mitochondrion inner membrane. The enzyme catalyses H(+)(in) = H(+)(out). Its function is as follows. Subunit a, of the mitochondrial membrane ATP synthase complex (F(1)F(0) ATP synthase or Complex V) that produces ATP from ADP in the presence of a proton gradient across the membrane which is generated by electron transport complexes of the respiratory chain. ATP synthase complex consist of a soluble F(1) head domain - the catalytic core - and a membrane F(1) domain - the membrane proton channel. These two domains are linked by a central stalk rotating inside the F(1) region and a stationary peripheral stalk. During catalysis, ATP synthesis in the catalytic domain of F(1) is coupled via a rotary mechanism of the central stalk subunits to proton translocation. With the subunit c (ATP5MC1), forms the proton-conducting channel in the F(0) domain, that contains two crucial half-channels (inlet and outlet) that facilitate proton movement from the mitochondrial intermembrane space (IMS) into the matrix. Protons are taken up via the inlet half-channel and released through the outlet half-channel, following a Grotthuss mechanism. In Phoca vitulina (Harbor seal), this protein is ATP synthase F(0) complex subunit a.